Here is a 492-residue protein sequence, read N- to C-terminus: Glutamyl-tRNA(Gln) amidotransferase subunit A, mitochondrial (492 aa).

Residues Lys78 and Ser159 each act as charge relay system in the active site. Residue Ser183 is the Acyl-ester intermediate of the active site.

The protein belongs to the amidase family. GatA subfamily. Subunit of the heterotrimeric GatCAB amidotransferase (AdT) complex, composed of A, B and C subunits.

It is found in the mitochondrion. It carries out the reaction L-glutamyl-tRNA(Gln) + L-glutamine + ATP + H2O = L-glutaminyl-tRNA(Gln) + L-glutamate + ADP + phosphate + H(+). Its function is as follows. Allows the formation of correctly charged Gln-tRNA(Gln) through the transamidation of misacylated Glu-tRNA(Gln) in the mitochondria. The reaction takes place in the presence of glutamine and ATP through an activated gamma-phospho-Glu-tRNA(Gln). This is Glutamyl-tRNA(Gln) amidotransferase subunit A, mitochondrial from Anopheles gambiae (African malaria mosquito).